Consider the following 319-residue polypeptide: Methionyl-tRNA formyltransferase (319 aa).

Position 110-113 (110-113 (SLLP)) interacts with (6S)-5,6,7,8-tetrahydrofolate.

It belongs to the Fmt family.

It catalyses the reaction L-methionyl-tRNA(fMet) + (6R)-10-formyltetrahydrofolate = N-formyl-L-methionyl-tRNA(fMet) + (6S)-5,6,7,8-tetrahydrofolate + H(+). Functionally, attaches a formyl group to the free amino group of methionyl-tRNA(fMet). The formyl group appears to play a dual role in the initiator identity of N-formylmethionyl-tRNA by promoting its recognition by IF2 and preventing the misappropriation of this tRNA by the elongation apparatus. The chain is Methionyl-tRNA formyltransferase from Geobacillus thermodenitrificans (strain NG80-2).